A 21-amino-acid chain; its full sequence is Misgurin (21 aa).

The segment at 1–21 (RQRVEELSKFSKKGAAARRRK) is disordered. Basic residues predominate over residues 10-21 (FSKKGAAARRRK).

It is found in the secreted. In terms of biological role, strong antimicrobial activity against several Gram-positive and Gram-negative bacteria and fungi. The protein is Misgurin of Misgurnus anguillicaudatus (Oriental weatherloach).